The sequence spans 286 residues: Phosphoribosylaminoimidazole-succinocarboxamide synthase (286 aa).

The protein belongs to the SAICAR synthetase family.

It catalyses the reaction 5-amino-1-(5-phospho-D-ribosyl)imidazole-4-carboxylate + L-aspartate + ATP = (2S)-2-[5-amino-1-(5-phospho-beta-D-ribosyl)imidazole-4-carboxamido]succinate + ADP + phosphate + 2 H(+). It participates in purine metabolism; IMP biosynthesis via de novo pathway; 5-amino-1-(5-phospho-D-ribosyl)imidazole-4-carboxamide from 5-amino-1-(5-phospho-D-ribosyl)imidazole-4-carboxylate: step 1/2. In Actinobacillus succinogenes (strain ATCC 55618 / DSM 22257 / CCUG 43843 / 130Z), this protein is Phosphoribosylaminoimidazole-succinocarboxamide synthase.